The chain runs to 257 residues: UPF0246 protein KPK_4750 (257 aa).

The protein belongs to the UPF0246 family.

This chain is UPF0246 protein KPK_4750, found in Klebsiella pneumoniae (strain 342).